The chain runs to 320 residues: MSFSAVTKGELARIYSKDRCCQLAELAALIRMCGTLQLVGGAQKLNIKLTTENPAIARKLFKLFKDLFGVHIEVMIRRNPRLRKNNHYLMVVTHGMGSTDILEKVKILKKEANSFDISYGVPLMLLQNRCCRRAYLRGAFLGGGSVSDPEKTYHLEFVTHSHEHSESLRDLINDFQLTSKIVERKGSYVVYLKEGDQIVDLLNIMEAHSALLELENVRIYKQMRNDVNRIVNCETANLSKTVDAAIRQIENIEYIKNTVGLGYLPENLREIAEIRLEYEDATLKELGEMLSPAIGKSGVNHRLRKIDEIATKLQEGKIKN.

A DNA-binding region (H-T-H motif) is located at residues threonine 282 to glutamate 315.

Belongs to the WhiA family.

Its function is as follows. Involved in cell division and chromosome segregation. The protein is Probable cell division protein WhiA of Alkaliphilus oremlandii (strain OhILAs) (Clostridium oremlandii (strain OhILAs)).